The following is a 144-amino-acid chain: Large ribosomal subunit protein uL15 (144 aa).

Residues 1-53 (MRLNTLSPAEGSKHASKRPGRGIGSGLGKTGGRGHKGQKSRSGGGVRRGFEGG) form a disordered region. Residues 21–31 (RGIGSGLGKTG) show a composition bias toward gly residues.

It belongs to the universal ribosomal protein uL15 family. Part of the 50S ribosomal subunit.

Its function is as follows. Binds to the 23S rRNA. The protein is Large ribosomal subunit protein uL15 of Sodalis glossinidius (strain morsitans).